Reading from the N-terminus, the 313-residue chain is Ubiquitin-conjugating enzyme E2 Z (313 aa).

Residues 58–212 (QCVLRIKRDI…IRHETIRVAV (155 aa)) form the UBC core domain. Cysteine 147 (glycyl thioester intermediate) is an active-site residue. A disordered region spans residues 283–313 (VREKHRKETVDIDSDSSSSETETDTQGSSNP). Positions 297-313 (DSSSSETETDTQGSSNP) are enriched in low complexity.

The protein belongs to the ubiquitin-conjugating enzyme family.

The protein localises to the cytoplasm. The protein resides in the nucleus. The catalysed reaction is S-ubiquitinyl-[E1 ubiquitin-activating enzyme]-L-cysteine + [E2 ubiquitin-conjugating enzyme]-L-cysteine = [E1 ubiquitin-activating enzyme]-L-cysteine + S-ubiquitinyl-[E2 ubiquitin-conjugating enzyme]-L-cysteine.. It functions in the pathway protein modification; protein ubiquitination. Its function is as follows. Catalyzes the covalent attachment of ubiquitin to other proteins. May be involved in apoptosis regulation. The chain is Ubiquitin-conjugating enzyme E2 Z (ube2z) from Xenopus tropicalis (Western clawed frog).